The primary structure comprises 436 residues: 3-ketoacyl-CoA thiolase (436 aa).

Cys99 functions as the Acyl-thioester intermediate in the catalytic mechanism. Active-site proton acceptor residues include His392 and Cys422.

This sequence belongs to the thiolase-like superfamily. Thiolase family. In terms of assembly, heterotetramer of two alpha chains (FadJ) and two beta chains (FadI).

The protein localises to the cytoplasm. It catalyses the reaction an acyl-CoA + acetyl-CoA = a 3-oxoacyl-CoA + CoA. It functions in the pathway lipid metabolism; fatty acid beta-oxidation. Functionally, catalyzes the final step of fatty acid oxidation in which acetyl-CoA is released and the CoA ester of a fatty acid two carbons shorter is formed. In Escherichia coli (strain SMS-3-5 / SECEC), this protein is 3-ketoacyl-CoA thiolase.